The following is a 1157-amino-acid chain: Voltage-dependent calcium channel subunit alpha-2/delta-2 (1157 aa).

Residues 1–18 (MAVPARTCGASWPGPVRT) form the signal peptide. Positions 1–37 (MAVPARTCGASWPGPVRTARPWPGRGPRPCPDPRGPA) are disordered. Residues 19–1119 (ARPWPGRGPR…TEDTSDCGRG (1101 aa)) are Extracellular-facing. A compositionally biased stretch (pro residues) spans 24-34 (GRGPRPCPDPR). An N-linked (GlcNAc...) asparagine glycan is attached at Asn205. The 179-residue stretch at 294–472 (DMVIIVDVSG…INTQEYLDVL (179 aa)) folds into the VWFA domain. Residues Asp300, Ser302, and Ser304 each coordinate a divalent metal cation. Positions 300–304 (DVSGS) match the MIDAS-like motif motif. Asn389, Asn421, Asn510, Asn543, Asn627, and Asn864 each carry an N-linked (GlcNAc...) asparagine glycan. Residues Cys446 and Cys1104 are joined by a disulfide bond. The region spanning 488–577 (WTNVYEDALG…KPQITNFREP (90 aa)) is the Cache domain. The chain crosses the membrane as a helical span at residues 1120 to 1140 (ASFPPSLGVLVSLQLLLLLGL). The Cytoplasmic segment spans residues 1141 to 1157 (PPRPQPQIHSFTPSRRL).

It belongs to the calcium channel subunit alpha-2/delta family. Dimer formed of alpha-2-2 and delta-2 chains; disulfide-linked. Voltage-dependent calcium channels are multisubunit complexes, consisting of alpha-1 (CACNA1), alpha-2 (CACNA2D), beta (CACNB) and delta (CACNA2D) subunits in a 1:1:1:1 ratio. N-glycosylated. In terms of processing, may be proteolytically processed into subunits alpha-2-2 and delta-2 that are disulfide-linked. It is however unclear whether such cleavage really takes place in vivo and has a functional role. In heart, it is highly expressed in atrium and at lower level in ventricle.

The protein localises to the membrane. Its function is as follows. The alpha-2/delta subunit of voltage-dependent calcium channels regulates calcium current density and activation/inactivation kinetics of the calcium channel. Acts as a regulatory subunit for P/Q-type calcium channel (CACNA1A), N-type (CACNA1B), L-type (CACNA1C OR CACNA1D) and possibly T-type (CACNA1G). Overexpression induces apoptosis. This chain is Voltage-dependent calcium channel subunit alpha-2/delta-2 (Cacna2d2), found in Rattus norvegicus (Rat).